The primary structure comprises 65 residues: Large ribosomal subunit protein bL35c (65 aa).

Residues 25-44 (HKASKSHLLQKKSSKQRRHL) are compositionally biased toward basic residues. Residues 25 to 45 (HKASKSHLLQKKSSKQRRHLS) form a disordered region.

This sequence belongs to the bacterial ribosomal protein bL35 family.

It is found in the plastid. The protein resides in the chloroplast. The sequence is that of Large ribosomal subunit protein bL35c from Pyropia yezoensis (Susabi-nori).